The sequence spans 245 residues: Putative insertion sequence ATP-binding protein y4pL (245 aa).

106-113 lines the ATP pocket; sequence GPSGVGKS.

This sequence belongs to the IS21/IS1162 putative ATP-binding protein family.

This Sinorhizobium fredii (strain NBRC 101917 / NGR234) protein is Putative insertion sequence ATP-binding protein y4pL.